Consider the following 106-residue polypeptide: ATP-dependent Clp protease adapter protein ClpS (106 aa).

Belongs to the ClpS family. Binds to the N-terminal domain of the chaperone ClpA.

In terms of biological role, involved in the modulation of the specificity of the ClpAP-mediated ATP-dependent protein degradation. This chain is ATP-dependent Clp protease adapter protein ClpS, found in Salmonella agona (strain SL483).